A 521-amino-acid polypeptide reads, in one-letter code: CD166 antigen (521 aa).

At 1–465 (GSPVFIAFRS…NREKVNDQAK (465 aa)) the chain is on the extracellular side. N-linked (GlcNAc...) asparagine glycans are attached at residues N29, N33, N105, N203, N244, N299, N395, N418, and N437. The Ig-like V-type 2 domain maps to 63–172 (PTVVKVFKQP…YGPSGQKTVH (110 aa)). Cysteines 95 and 158 form a disulfide. 3 consecutive Ig-like C2-type domains span residues 183-266 (PTEQ…TAIT), 271-347 (DLSL…ESLT), and 354-439 (PQIK…LNVS). 3 disulfides stabilise this stretch: C208-C251, C292-C330, and C373-C423. Residues 466–487 (LIVGIVVGLLLAALVAGVVYWL) traverse the membrane as a helical segment. Residues 488–521 (YMKKSKTASKHVNKDLGNMEENKKLEENNHKTEA) are Cytoplasmic-facing. The disordered stretch occupies residues 500–521 (NKDLGNMEENKKLEENNHKTEA). Basic and acidic residues predominate over residues 507 to 521 (EENKKLEENNHKTEA).

Homodimer. Interacts (via extracellular domain) with CD6 (via extracellular domain). Homodimerization and interaction with CD6 involve the same region and cannot occur simultaneously. The affinity for CD6 is much higher than the affinity for self-association. Interacts (via glycosylated extracellular domain) with LGALS1 and LGALS3. Interaction with LGALS1 or LGALS3 inhibits interaction with CD6. Post-translationally, glycosylated.

Its subcellular location is the cell membrane. The protein resides in the cell projection. It localises to the axon. The protein localises to the dendrite. In terms of biological role, cell adhesion molecule that mediates both heterotypic cell-cell contacts via its interaction with CD6, as well as homotypic cell-cell contacts. Promotes T-cell activation and proliferation via its interactions with CD6. Contributes to the formation and maturation of the immunological synapse via its interactions with CD6. Mediates homotypic interactions with cells that express ALCAM. Mediates attachment of dendritic cells onto endothelial cells via homotypic interaction. Inhibits endothelial cell migration and promotes endothelial tube formation via homotypic interactions. Required for normal organization of the lymph vessel network. Required for normal hematopoietic stem cell engraftment in the bone marrow. Plays a role in hematopoiesis; required for normal numbers of hematopoietic stem cells in bone marrow. Promotes in vitro osteoblast proliferation and differentiation. Promotes neurite extension, axon growth and axon guidance; axons grow preferentially on surfaces that contain ALCAM. Mediates outgrowth and pathfinding for retinal ganglion cell axons. The chain is CD166 antigen (ALCAM) from Oryctolagus cuniculus (Rabbit).